A 519-amino-acid chain; its full sequence is Exodeoxyribonuclease 7 large subunit (519 aa).

The tract at residues 500–519 (VGRGKTRKPKEEPPAQGSLL) is disordered.

This sequence belongs to the XseA family. Heterooligomer composed of large and small subunits.

It is found in the cytoplasm. It carries out the reaction Exonucleolytic cleavage in either 5'- to 3'- or 3'- to 5'-direction to yield nucleoside 5'-phosphates.. Its function is as follows. Bidirectionally degrades single-stranded DNA into large acid-insoluble oligonucleotides, which are then degraded further into small acid-soluble oligonucleotides. The protein is Exodeoxyribonuclease 7 large subunit of Cereibacter sphaeroides (strain ATCC 17023 / DSM 158 / JCM 6121 / CCUG 31486 / LMG 2827 / NBRC 12203 / NCIMB 8253 / ATH 2.4.1.) (Rhodobacter sphaeroides).